The primary structure comprises 553 residues: Glucose-6-phosphate isomerase (553 aa).

The Proton donor role is filled by Glu357. Catalysis depends on residues His388 and Lys514. Residues Ala527–Ala553 are disordered. Over residues Leu541–Ala553 the composition is skewed to basic and acidic residues.

The protein belongs to the GPI family.

It localises to the cytoplasm. The enzyme catalyses alpha-D-glucose 6-phosphate = beta-D-fructose 6-phosphate. The protein operates within carbohydrate biosynthesis; gluconeogenesis. It functions in the pathway carbohydrate degradation; glycolysis; D-glyceraldehyde 3-phosphate and glycerone phosphate from D-glucose: step 2/4. Catalyzes the reversible isomerization of glucose-6-phosphate to fructose-6-phosphate. The chain is Glucose-6-phosphate isomerase from Mycolicibacterium vanbaalenii (strain DSM 7251 / JCM 13017 / BCRC 16820 / KCTC 9966 / NRRL B-24157 / PYR-1) (Mycobacterium vanbaalenii).